An 88-amino-acid chain; its full sequence is Small ribosomal subunit protein bS20 (88 aa).

The segment at 1-27 (MANTPQAKKRARQNEKARKHNASMRSM) is disordered. Basic residues predominate over residues 7 to 22 (AKKRARQNEKARKHNA).

It belongs to the bacterial ribosomal protein bS20 family.

In terms of biological role, binds directly to 16S ribosomal RNA. This Cellvibrio japonicus (strain Ueda107) (Pseudomonas fluorescens subsp. cellulosa) protein is Small ribosomal subunit protein bS20.